The following is a 314-amino-acid chain: Methionyl-tRNA formyltransferase (314 aa).

Serine 110 to proline 113 serves as a coordination point for (6S)-5,6,7,8-tetrahydrofolate.

The protein belongs to the Fmt family.

It carries out the reaction L-methionyl-tRNA(fMet) + (6R)-10-formyltetrahydrofolate = N-formyl-L-methionyl-tRNA(fMet) + (6S)-5,6,7,8-tetrahydrofolate + H(+). In terms of biological role, attaches a formyl group to the free amino group of methionyl-tRNA(fMet). The formyl group appears to play a dual role in the initiator identity of N-formylmethionyl-tRNA by promoting its recognition by IF2 and preventing the misappropriation of this tRNA by the elongation apparatus. The sequence is that of Methionyl-tRNA formyltransferase from Bacillus cereus (strain B4264).